The following is a 367-amino-acid chain: Peptide chain release factor 2 (367 aa).

An N5-methylglutamine modification is found at Gln-254.

Belongs to the prokaryotic/mitochondrial release factor family. In terms of processing, methylated by PrmC. Methylation increases the termination efficiency of RF2.

The protein localises to the cytoplasm. Its function is as follows. Peptide chain release factor 2 directs the termination of translation in response to the peptide chain termination codons UGA and UAA. The protein is Peptide chain release factor 2 of Bordetella avium (strain 197N).